The chain runs to 205 residues: Arginine exporter protein ArgO (205 aa).

A run of 6 helical transmembrane segments spans residues 1-21 (MLAVFLQGFALSAAMILPLGP), 42-62 (LCALSDIILICAGIFGGSALL), 67-87 (LLLALVTWGGVAFLLWYGWGA), 111-131 (IIVTLLAVTWLNPHVYLDTFV), 147-167 (WFAFGAVSASVAWFFALALLA), and 182-202 (VINLLVGGVMWFIAFQLARQG).

It belongs to the LysE/ArgO transporter (TC 2.A.75) family.

It localises to the cell inner membrane. It catalyses the reaction L-arginine(in) = L-arginine(out). Involved in the export of arginine. Important to control the intracellular level of arginine and the correct balance between arginine and lysine. The sequence is that of Arginine exporter protein ArgO from Yersinia enterocolitica serotype O:8 / biotype 1B (strain NCTC 13174 / 8081).